Consider the following 243-residue polypeptide: R-spondin-2 (243 aa).

Positions 1–23 are cleaved as a signal peptide; the sequence is MRFCLFSFALIILNCMDYSQCQG. Cystine bridges form between Cys40/Cys46, Cys43/Cys52, Cys55/Cys74, Cys78/Cys93, Cys96/Cys104, Cys101/Cys110, Cys113/Cys124, Cys128/Cys141, Cys145/Cys187, Cys156/Cys163, and Cys196/Cys203. The stretch at 90–134 is one FU repeat; sequence MNRCARCRIENCDSCFSKDFCTKCKVGFYLHRGRCFDECPDGFAP. The TSP type-1 domain occupies 144-204; it reads GCEVGHWSEW…RCKMAMRHCP (61 aa). Asn160 carries N-linked (GlcNAc...) asparagine glycosylation. Positions 204-224 are enriched in basic residues; the sequence is PGGKRTPKAKEKRNKKKRRKL. A disordered region spans residues 204 to 243; that stretch reads PGGKRTPKAKEKRNKKKRRKLIERAQEQHSVFLATDRVNQ.

The protein belongs to the R-spondin family. In terms of assembly, interacts with WNT1. Binds heparin. Interacts with LGR4, LGR5 and LGR6.

The protein localises to the secreted. Functionally, activator of the canonical Wnt signaling pathway by acting as a ligand for LGR4-6 receptors. Upon binding to LGR4-6 (LGR4, LGR5 or LGR6), LGR4-6 associate with phosphorylated LRP6 and frizzled receptors that are activated by extracellular Wnt receptors, triggering the canonical Wnt signaling pathway to increase expression of target genes. Also regulates the canonical Wnt/beta-catenin-dependent pathway and non-canonical Wnt signaling by acting as an inhibitor of ZNRF3, an important regulator of the Wnt signaling pathway. Probably also acts as a ligand for frizzled and LRP receptors. During embryonic development, plays a crucial role in limb specification, amplifying the Wnt signaling pathway independently of LGR4-6 receptors, possibly by acting as a direct antagonistic ligand to RNF43 and ZNRF3, hence governing the number of limbs an embryo should form. In Mus musculus (Mouse), this protein is R-spondin-2 (Rspo2).